A 620-amino-acid polypeptide reads, in one-letter code: Probable translation initiation factor IF-2 (620 aa).

The segment covering 1–10 (MSDTDADADT) has biased composition (acidic residues). Residues 1–29 (MSDTDADADTDAVSTTETSMNADANANAD) are disordered. Residues 11–29 (DAVSTTETSMNADANANAD) are compositionally biased toward low complexity. Residues 33 to 248 (LRTPIVAVLG…VLMGLSQRYM (216 aa)) form the tr-type G domain. The tract at residues 42 to 49 (GHVDHGKT) is G1. 42–49 (GHVDHGKT) is a binding site for GTP. The G2 stretch occupies residues 67 to 71 (AITQH). Residues 104–107 (DTPG) are G3. GTP is bound by residues 104–108 (DTPGH) and 158–161 (NKVD). The interval 158-161 (NKVD) is G4. Over residues 162 to 183 (TTPGWTPTDGSPIQPTYESQPS) the composition is skewed to polar residues. Positions 162–185 (TTPGWTPTDGSPIQPTYESQPSAA) are disordered. Positions 226–228 (SAI) are G5.

It belongs to the TRAFAC class translation factor GTPase superfamily. Classic translation factor GTPase family. IF-2 subfamily.

In terms of biological role, function in general translation initiation by promoting the binding of the formylmethionine-tRNA to ribosomes. Seems to function along with eIF-2. The chain is Probable translation initiation factor IF-2 from Haloquadratum walsbyi (strain DSM 16790 / HBSQ001).